The chain runs to 332 residues: Isopentenyl-diphosphate delta-isomerase (332 aa).

6–7 (RK) is a binding site for substrate. FMN-binding positions include 65–67 (AMT), Ser-95, and Asn-123. 95–97 (SGR) serves as a coordination point for substrate. Gln-157 contacts substrate. Glu-158 lines the Mg(2+) pocket. Residues Lys-187, Thr-217, 264–266 (GVY), Ala-285, and 285–286 (AR) contribute to the FMN site.

Belongs to the IPP isomerase type 2 family. In terms of assembly, homooctamer. Dimer of tetramers. Requires FMN as cofactor. The cofactor is NADPH. Mg(2+) serves as cofactor.

Its subcellular location is the cytoplasm. The enzyme catalyses isopentenyl diphosphate = dimethylallyl diphosphate. Its activity is regulated as follows. Competitively inhibited by N,N-dimethyl-2-amino-1-ethyl diphosphate (NIPP) and isopentyl diphosphate. In terms of biological role, involved in the biosynthesis of isoprenoids. Catalyzes the 1,3-allylic rearrangement of the homoallylic substrate isopentenyl (IPP) to its allylic isomer, dimethylallyl diphosphate (DMAPP). The protein is Isopentenyl-diphosphate delta-isomerase of Thermus thermophilus (strain ATCC BAA-163 / DSM 7039 / HB27).